The primary structure comprises 28 residues: Grammistin Gs A (28 aa).

The protein belongs to the grammistin family. Group 3 subfamily. In terms of assembly, exists as aggregates of 3-4 molecules. In terms of tissue distribution, expressed by the skin glands.

It localises to the secreted. Its function is as follows. Thanks to its amphiphilic alpha-helice(s), it may integrate into membrane phospholipids, leading to lysis of the membrane. Has no substantial hemolytic activity. Has antibacterial activity with a broad spectrum against various species of bacteria including both Gram-positive and Gram-negative groups. The chain is Grammistin Gs A from Grammistes sexlineatus (Goldenstriped soapfish).